The following is a 72-amino-acid chain: Exodeoxyribonuclease 7 small subunit (72 aa).

The protein belongs to the XseB family. In terms of assembly, heterooligomer composed of large and small subunits.

Its subcellular location is the cytoplasm. The catalysed reaction is Exonucleolytic cleavage in either 5'- to 3'- or 3'- to 5'-direction to yield nucleoside 5'-phosphates.. Its function is as follows. Bidirectionally degrades single-stranded DNA into large acid-insoluble oligonucleotides, which are then degraded further into small acid-soluble oligonucleotides. The polypeptide is Exodeoxyribonuclease 7 small subunit (Chlamydia trachomatis serovar D (strain ATCC VR-885 / DSM 19411 / UW-3/Cx)).